The primary structure comprises 236 residues: CD81 antigen (236 aa).

Residues 1–12 are Cytoplasmic-facing; sequence MGVEGCTKCIKY. Residues 13–33 form a helical membrane-spanning segment; that stretch reads LLFVFNFVFWLAGGVILGVAL. The Extracellular segment spans residues 34-63; it reads WLRHDPQTTTLLYLELGDKPAPSTFYVGIY. Residues 64–84 form a helical membrane-spanning segment; sequence ILIAVGAVMMFVGFLGCYGAI. At 85-89 the chain is on the cytoplasmic side; the sequence is QESQC. A helical membrane pass occupies residues 90 to 112; that stretch reads LLGTFFTCLVILFACEVAAGIWG. The Extracellular segment spans residues 113 to 201; the sequence is FVNKDQIAKD…QKIDELFSGK (89 aa). Intrachain disulfides connect Cys-156-Cys-190 and Cys-157-Cys-175. A helical transmembrane segment spans residues 202-224; that stretch reads LYLIGIAAIVVAVIMIFEMILSM. Residue Glu-219 coordinates cholesterol. Residues 225 to 236 are Cytoplasmic-facing; that stretch reads VLCCGIRNSSVY.

The protein belongs to the tetraspanin (TM4SF) family. As to quaternary structure, homodimer. Part of a complex composed of CD19, CR2/CD21, CD81 and IFITM1/CD225 in the membrane of mature B cells. Interacts (via the second extracellular domain) with CD19; this interaction is initiated early during biosynthesis in the ER and enables trafficking of only properly folded CD19. Part of a complex that includes MHC class II/HLA-DR molecules and IFITM1. Interacts with IFITM1. Interacts with IFITM2 and IFITM3. Part of integrin-tetraspanin complex composed of CD9, CD81, beta-1 and beta-2 integrins in the membrane of monocyte/macrophages. Interacts (via the second extracellular domain) with integrin ITGAV:ITGB3. Interacts with CD247/CD3 zeta, ICAM1 and CD9 at the immune synapse on T cell membrane. Part of a GPCR-tetraspanin complex consisting at least of ADGRG1, CD81, possibly CD9, and GNA11 in which CD81 enhances the association of ADGRG1 with GNA11. Part of a complex composed of CD9, CD81, PTGFRN and IGSF8. Interacts directly with IGSF8. Interacts with CD53 and SCIMP. Interacts with SAMHD1 (via its C-terminus). Interacts with glypican GPC3 and with the transcriptional repressor HHEX; binding to GPC3 decreases the availability of free CD81 for binding to HHEX, resulting in nuclear translocation of HHEX and transcriptional repression. Interacts with CLDN1. Interacts with CLDN6 and CLDN9. Not glycosylated. In terms of processing, likely constitutively palmitoylated at low levels. Protein palmitoylation is up-regulated upon coligation of BCR and CD9-C2R-CD81 complexes in lipid rafts.

It is found in the cell membrane. The protein localises to the basolateral cell membrane. In terms of biological role, structural component of specialized membrane microdomains known as tetraspanin-enriched microdomains (TERMs), which act as platforms for receptor clustering and signaling. Essential for trafficking and compartmentalization of CD19 receptor on the surface of activated B cells. Upon initial encounter with microbial pathogens, enables the assembly of CD19-CR2/CD21 and B cell receptor (BCR) complexes at signaling TERMs, lowering the threshold dose of antigen required to trigger B cell clonal expansion and antibody production. In T cells, facilitates the localization of CD247/CD3 zeta at antigen-induced synapses with B cells, providing for costimulation and polarization toward T helper type 2 phenotype. Present in MHC class II compartments, may also play a role in antigen presentation. Can act both as positive and negative regulator of homotypic or heterotypic cell-cell fusion processes. Positively regulates sperm-egg fusion and may be involved in acrosome reaction. In myoblasts, associates with CD9 and PTGFRN and inhibits myotube fusion during muscle regeneration. In macrophages, associates with CD9 and beta-1 and beta-2 integrins, and prevents macrophage fusion into multinucleated giant cells specialized in ingesting complement-opsonized large particles. Also prevents the fusion of mononuclear cell progenitors into osteoclasts in charge of bone resorption. May regulate the compartmentalization of enzymatic activities. In T cells, defines the subcellular localization of dNTPase SAMHD1 and permits its degradation by the proteasome, thereby controlling intracellular dNTP levels. Also involved in cell adhesion and motility. Positively regulates integrin-mediated adhesion of macrophages, particularly relevant for the inflammatory response in the lung. The protein is CD81 antigen (Cd81) of Rattus norvegicus (Rat).